A 333-amino-acid polypeptide reads, in one-letter code: Phosphoenolpyruvate transferase (333 aa).

Asp-65 contacts 7,8-didemethyl-8-hydroxy-5-deazariboflavin.

This sequence belongs to the CofD family. Homodimer. The cofactor is Mg(2+).

The enzyme catalyses enolpyruvoyl-2-diphospho-5'-guanosine + 7,8-didemethyl-8-hydroxy-5-deazariboflavin = dehydro coenzyme F420-0 + GMP + H(+). It participates in cofactor biosynthesis; coenzyme F420 biosynthesis. In terms of biological role, catalyzes the transfer of the phosphoenolpyruvate moiety from enoylpyruvoyl-2-diphospho-5'-guanosine (EPPG) to 7,8-didemethyl-8-hydroxy-5-deazariboflavin (FO) with the formation of dehydro coenzyme F420-0 and GMP. The polypeptide is Phosphoenolpyruvate transferase (Mycobacterium leprae (strain TN)).